Here is a 262-residue protein sequence, read N- to C-terminus: MRGRSYTPSPPRGYGRRGRSPSPRGRFGGSRDSDLPTSLLVRNLRHDCRQEDLRRPFEQFGPVKDIYLPRDYYTGDPRGFGFIQFMDPADAAEAKHQMDGYLLLGRELTVVFAEENRKKPTEMRTRDRGGRSNRFQDRRRSPPRYSRSPPPRRGRRSRSRSRGYNSPPAKRHQSRSVSPQDRRYEKERSYSRSPPHNGSRVRSGSPGRVKSHSRSPRRSVSPRKNRSYTPEQARSQSPVPRQSRSPTPVPRGAQNGDRSPSQ.

Disordered stretches follow at residues 1–38 (MRGR…LPTS) and 115–262 (ENRK…SPSQ). Residues serine 9 and serine 20 each carry the phosphoserine modification. The 79-residue stretch at 37-115 (TSLLVRNLRH…RELTVVFAEE (79 aa)) folds into the RRM domain. Positions 115 to 140 (ENRKKPTEMRTRDRGGRSNRFQDRRR) are enriched in basic and acidic residues. The segment covering 150 to 161 (PPRRGRRSRSRS) has biased composition (basic residues). Phosphoserine is present on residues serine 166, serine 174, serine 176, and serine 178. The span at 180-190 (QDRRYEKERSY) shows a compositional bias: basic and acidic residues. Phosphoserine occurs at positions 191 and 193. Residues 209-226 (VKSHSRSPRRSVSPRKNR) show a composition bias toward basic residues. A compositionally biased stretch (low complexity) spans 234–246 (RSQSPVPRQSRSP). Phosphoserine occurs at positions 235, 259, and 261.

The protein belongs to the splicing factor SR family. SCL subfamily. As to quaternary structure, component of the spliceosome. Interacts with SNRNP35, CYP59 and RS2Z33.

It localises to the nucleus speckle. In terms of biological role, involved in intron recognition and spliceosome assembly. Binds probably to multiple 5'-GAAG-3' repeats found in its third intron, suggesting autoregulation of alternative splicing. May be necessary for accurate splicing of the 3' region of introns. This is Serine/arginine-rich SC35-like splicing factor SCL30A (SCL30A) from Arabidopsis thaliana (Mouse-ear cress).